Consider the following 209-residue polypeptide: Large ribosomal subunit protein uL3 (209 aa).

The disordered stretch occupies residues 118 to 151 (GFQGAIKRHGQSRGPMSHGSRYHRRPGSMGPVAP).

Belongs to the universal ribosomal protein uL3 family. In terms of assembly, part of the 50S ribosomal subunit. Forms a cluster with proteins L14 and L19.

In terms of biological role, one of the primary rRNA binding proteins, it binds directly near the 3'-end of the 23S rRNA, where it nucleates assembly of the 50S subunit. The chain is Large ribosomal subunit protein uL3 from Enterococcus faecalis (strain ATCC 700802 / V583).